Here is a 70-residue protein sequence, read N- to C-terminus: Probable tautomerase RSp0893 (70 aa).

The Proton acceptor; via imino nitrogen role is filled by Pro2.

This sequence belongs to the 4-oxalocrotonate tautomerase family.

This chain is Probable tautomerase RSp0893, found in Ralstonia nicotianae (strain ATCC BAA-1114 / GMI1000) (Ralstonia solanacearum).